We begin with the raw amino-acid sequence, 292 residues long: NAC domain-containing protein 96 (292 aa).

An NAC domain is found at 6-158 (LPPGFRFHPT…AFVLCRVAMK (153 aa)). Residues 106 to 164 (IGYRKTLVFYKGRAPLGDRSNWIMHEYRLCDDDTSQGSQNLKGAFVLCRVAMKNEIKTN) mediate DNA binding. A disordered region spans residues 171–199 (PSEQTIGSGESSGLSSRVTSPSRDETMPF). Residues 172–191 (SEQTIGSGESSGLSSRVTSP) show a composition bias toward polar residues.

Interacts with ABF2 and ABF4. In terms of tissue distribution, expressed in roots, rosettes leaves, cauline leaves and stems.

It localises to the nucleus. Transcriptional activator involved in the positive regulation of abscisic acid (ABA) responsive genes. Acts as a positive factor of ABA-mediated responses. Involved in the transcriptional activation of ABA-inducible genes in response to dehydration and osmotic stresses. Plays a positive role in both stomatal closure and water loss under dehydration stress conditions. Acts synergistically with ABF2 to activate the dehydration stress-response factor RD29A transcription. Binds to the consensus core cis-acting elements 5'-CGTA-3' and 5'-CACG-3' at the RD29A promoter. Involved in hypocotyl graft union formation. Required for the auxin-mediated promotion of vascular tissue proliferation during hypocotyl graft attachment. The protein is NAC domain-containing protein 96 of Arabidopsis thaliana (Mouse-ear cress).